A 493-amino-acid chain; its full sequence is Glutamyl-tRNA(Gln) amidotransferase subunit A (493 aa).

Active-site charge relay system residues include K78 and S158. S182 functions as the Acyl-ester intermediate in the catalytic mechanism.

This sequence belongs to the amidase family. GatA subfamily. Heterotrimer of A, B and C subunits.

It catalyses the reaction L-glutamyl-tRNA(Gln) + L-glutamine + ATP + H2O = L-glutaminyl-tRNA(Gln) + L-glutamate + ADP + phosphate + H(+). Its function is as follows. Allows the formation of correctly charged Gln-tRNA(Gln) through the transamidation of misacylated Glu-tRNA(Gln) in organisms which lack glutaminyl-tRNA synthetase. The reaction takes place in the presence of glutamine and ATP through an activated gamma-phospho-Glu-tRNA(Gln). The chain is Glutamyl-tRNA(Gln) amidotransferase subunit A from Rickettsia canadensis (strain McKiel).